A 541-amino-acid chain; its full sequence is MAKQIKYGEEARRALERGVNAVADTVKVTLGPRGRNVVLDKKYGSPTVTNDGVTIAREIELEDPFENQGAQLLKEVATKTNDVAGDGTTTATLLAQAMVREGLKNLAAGANPMLLRRGIAKAVDAAVEGLKRISKPIDNKESIAHVASISAADEEIGNLIAEAMDKVGKDGVITVEESKTLGTTLEVVEGMQFDRGYISPYMVTDAEKMEAVLEEPVILITDKKLSNIQDLLPLLEQVVQHGKKLLIIADDVEGEALATLVVNKLRGTFTCVAVKAPGFGDRRKEMLQDIAILTGGQVISEELGYDLKDVRLDMLGRARQVKVTKENTTIVGGAGDAAEIKKRVNQIKAQIEETTSDYDREKLQERLAKLAGGVAVIQAGAATETELKEKKHRIEDALAATKAAVEEGIVPGGGIALLNVIEDVQKVVDSLDGDFKTGAKIVLRALEEPVRQIAANAGVDGSVIVEKIKAAKDPNFGYDAYKEEFTDMFKAGIVDPTKVTRTALQNAASIASMILTTEAVVVDVPEKNTAMPNPGAGMDMM.

Residues 29 to 32 (TLGP), 86 to 90 (DGTTT), Gly-413, and Asp-495 contribute to the ATP site.

This sequence belongs to the chaperonin (HSP60) family. Forms a cylinder of 14 subunits composed of two heptameric rings stacked back-to-back. Interacts with the co-chaperonin GroES.

Its subcellular location is the cytoplasm. The enzyme catalyses ATP + H2O + a folded polypeptide = ADP + phosphate + an unfolded polypeptide.. Functionally, together with its co-chaperonin GroES, plays an essential role in assisting protein folding. The GroEL-GroES system forms a nano-cage that allows encapsulation of the non-native substrate proteins and provides a physical environment optimized to promote and accelerate protein folding. The chain is Chaperonin GroEL from Thermoanaerobacter pseudethanolicus (strain ATCC 33223 / 39E) (Clostridium thermohydrosulfuricum).